The primary structure comprises 1357 residues: Mediator of RNA polymerase II transcription subunit 13 (1357 aa).

2 disordered regions span residues 356–391 and 420–487; these read SCNY…GNGF and DLWN…HRKE. Over residues 435-451 the composition is skewed to polar residues; that stretch reads INPTSQQGDSARITSGS.

The protein belongs to the Mediator complex subunit 13 family. As to quaternary structure, component of the SRB8-11 complex, which itself associates with the Mediator complex.

The protein localises to the nucleus. Its function is as follows. Component of the SRB8-11 complex. The SRB8-11 complex is a regulatory module of the Mediator complex which is itself involved in regulation of basal and activated RNA polymerase II-dependent transcription. The SRB8-11 complex may be involved in the transcriptional repression of a subset of genes regulated by Mediator. It may inhibit the association of the Mediator complex with RNA polymerase II to form the holoenzyme complex. In Eremothecium gossypii (strain ATCC 10895 / CBS 109.51 / FGSC 9923 / NRRL Y-1056) (Yeast), this protein is Mediator of RNA polymerase II transcription subunit 13 (SSN2).